The sequence spans 179 residues: Insulin-like growth factor 2 (179 aa).

Positions 1 to 24 (MGITAGKSMLALLAFLAFASCCYA) are cleaved as a signal peptide. The interval 25 to 52 (AYRPSETLCGGELVDTLQFVCGDRGFYF) is b. 3 disulfide bridges follow: C33–C71, C45–C84, and C70–C75. The interval 53 to 64 (SRPSSRINRRSR) is c. The tract at residues 65–85 (GIVEECCFRSCDLALLETYCA) is a. The interval 86-91 (APAKSE) is d. Residues 92–179 (RDVSASTTVL…GGASSEASSD (88 aa)) constitute a propeptide, e peptide. O-linked (GalNAc...) threonine glycosylation is present at T106. O-linked (GalNAc...) serine glycosylation occurs at S154. Residues 160–179 (ALPTQDPATHGGASSEASSD) form a disordered region. Residue T163 is glycosylated (O-linked (GalNAc...) threonine).

This sequence belongs to the insulin family. As to quaternary structure, interacts with MYORG; this interaction is required for IGF2 secretion. Interacts with integrins ITGAV:ITGB3 and ITGA6:ITGB4; integrin-binding is required for IGF2 signaling. Interacts with IGFBP2. Proteolytically processed by PCSK4, proIGF2 is cleaved at Arg-128 and Arg-92 to generate big-IGF2 and mature IGF2.

It localises to the secreted. Functionally, the insulin-like growth factors possess growth-promoting activity. Major fetal growth hormone in mammals. Plays a key role in regulating fetoplacental development. IGF2 is influenced by placental lactogen. Also involved in tissue differentiation. In adults, involved in glucose metabolism in adipose tissue, skeletal muscle and liver. Acts as a ligand for integrin which is required for IGF2 signaling. Positively regulates myogenic transcription factor MYOD1 function by facilitating the recruitment of transcriptional coactivators, thereby controlling muscle terminal differentiation. Inhibits myoblast differentiation and modulates metabolism via increasing the mitochondrial respiration rate. Preptin undergoes glucose-mediated co-secretion with insulin, and acts as a physiological amplifier of glucose-mediated insulin secretion. Exhibits osteogenic properties by increasing osteoblast mitogenic activity through phosphoactivation of MAPK1 and MAPK3. This is Insulin-like growth factor 2 from Ovis aries (Sheep).